We begin with the raw amino-acid sequence, 322 residues long: DNA repair and recombination protein RadA (322 aa).

105 to 112 lines the ATP pocket; the sequence is GMYGSGKT.

Belongs to the eukaryotic RecA-like protein family.

Involved in DNA repair and in homologous recombination. Binds and assemble on single-stranded DNA to form a nucleoprotein filament. Hydrolyzes ATP in a ssDNA-dependent manner and promotes DNA strand exchange between homologous DNA molecules. The polypeptide is DNA repair and recombination protein RadA (Methanococcus maripaludis (strain C5 / ATCC BAA-1333)).